The sequence spans 1728 residues: MRRLILSQTLRVAGRHRPPVAMFLQRFYRGHGISTALPLHYSKRHRKREGRMYGKPLRPVSDGENGASGDGGVLTRWEAVVSSRHQCESPVQTLAKSEKPKKAENTVAGKMTGSSRFSHRRDHSAYPSGVQPAPLATSGLPTQSSERQQQKQIGQQQVPLDALHRLFKVHAVMRTNYEALGKCTKVLKSFSTACAEALLQLGVLQKEQPSAMERKGFIDVQLCKSRVTEASKNGTSSPCFVLPPESPLYRTTIKFPTITVEHVLTTTVPAGCGAKDSGGDIMSVDMEGAAPFPMGHCESRPSTSAGNGVTVEYDCEGDVLSHGAAWNSIIEGFGQLALNLKQNASVSDFAQLAETLAYFKWVKDEEQVGWGTEDCVVKKFREAMANAKDTSASGSDPNTSDVSAALAAIAESFLRKIPRVDCIGSAVVHRGGERTAPSVHAIDVMLNLALRMCLSQWHAMSHFERMNIVLFCTYPWFAEDLSIAAGLCLTQSYLQSLLRADADVTYQHTFHYVRRVSRLCWPCIHDTDSAPVKKLLFPRDPQGTAVSSHALEAVSVEEKDNQLNQKEGLQGEEQATTTSESKLMWLPSFKDASCVSYGSSMKQRAAYELLLLWMTCVNPSGLHRSSPHGRYVSATGIAIIDVDLFVTQRFRTGKSKDEWLLLHPVEGDVVASVTIRTMVQHCETPYALTRLFFCNFHSVLPHIWGGIGARRREIIWTAWCRAVAQPLVNTLSGSDEGQREDDGGMQTLQITVDNADRTLDYLKPLISALTSDELFLRLIMRCADKSLEEMACEIGSGNNTLPLSKWCAQLAGFVYSVAFALHCRAKREGCNRDGGPSRPNTATDSANKKVVSGKQTDNLPKGTQEDISDLQLQFKAAVSALLRKLSAGDTQVAEQLLHHFYEPHFSGDQEREVVEDIQRHLQQVCDSQSRDALHAWIECSARASCEATVPLKEELLCKWQRTVLEADAGLPVVLPTIVECCRGLVGLVKKRGRNISGRRQGQQRGTESTTVGEESSCKEVFSKEELPVVITVLSRAMLTRTSTVSTVGLTKISSEISTLLSSCGYETADGNTSGGGRNGRELCDTNTATITSATAGERTVELELILSGEIDQKAGELPWITILEAVQLQLVPYTVVKNLLTSFKGGCDNGKERLRWQELQRDFQRKRHHRLVGNTLVFRWYGCAVPNDEGWEDGSGLMRPMAEDRDNVHSASHQGRTSTELGAFTRRLLKTLARAEVTRLDDRKEITTQTFVVGPSDDSATRHPTPGQEEDANLQRLDLLFRVHTLAAHILMTASTKKPHMIHELYDTLLHLVERVMPTTPNAPGNASDLLLLWLVGSAVAVGLRFRPNFLIKWPSTPEVSSGNLKSCPSAEEKTVHILRDIEPYLQSELLRPTVRLRFVINVLVALRSLELLGARIDVEGLHMDQLLVRASADRRLLSRHVNLFLIGCSALQSTQSSILHTALHLREAKYNLSFAEIERAFVAIALSADTFARQHEALMEQNYQQQQNRTLSVTVAANNTTPALRVSPVQLRHAWSALGRRVLENAGESPTDLFVRGLQCAAAVGCIDSALYQQLLSYVVEFRWEDLHILDWVMILRTVRQSFENRRNLEAYLKEPLQAFMLTMTDSGDNSTEQSVQKVNLKNHEGEQLLEGLCLFAEALPGLFIGDRELWGLLWQALGSQWSACFNAASNIEEQQRITAWLQEINASYAWAARAAGFRGLDEPTAL.

The N-terminal 117 residues, 1 to 117 (MRRLILSQTL…AGKMTGSSRF (117 aa)), are a transit peptide targeting the mitochondrion. 3 disordered regions span residues 45-71 (HRKREGRMYGKPLRPVSDGENGASGDG), 88-156 (ESPV…IGQQ), and 829-863 (GCNRDGGPSRPNTATDSANKKVVSGKQTDNLPKGT).

In terms of assembly, component of the mitochondrial 3' processome (MPsome) complex composed at least of terminal uridylyltransferase KRET1/TUT1, 3'-5' exonuclease DSS1, MPSS1, MPSS2 and MPSS3. Within the complex, interacts with KRET1.

It localises to the mitochondrion. In terms of biological role, as part of the mitochondrial 3' processome (MPsome), involved in the maturation of guided RNA (gRNA) precursors. In Trypanosoma brucei brucei, this protein is Mitochondrial 3' processome subunit 1.